Reading from the N-terminus, the 128-residue chain is Large ribosomal subunit protein bL19 (128 aa).

The protein belongs to the bacterial ribosomal protein bL19 family.

This protein is located at the 30S-50S ribosomal subunit interface and may play a role in the structure and function of the aminoacyl-tRNA binding site. This is Large ribosomal subunit protein bL19 from Paraburkholderia xenovorans (strain LB400).